A 347-amino-acid chain; its full sequence is F-box/kelch-repeat protein At5g03020 (347 aa).

Residues 1-21 (MTEEMSKESPPPPPTSFSSLP) are disordered. One can recognise an F-box domain in the interval 14-62 (PTSFSSLPDDVALDCRARISRFHYPTLSLVSKGFRTLIASPELEATRSF). 2 Kelch repeats span residues 119 to 165 (QIYI…VIDG) and 167 to 215 (IYVI…KKKH).

The sequence is that of F-box/kelch-repeat protein At5g03020 from Arabidopsis thaliana (Mouse-ear cress).